A 447-amino-acid polypeptide reads, in one-letter code: Glutamate--tRNA ligase 2 (447 aa).

The short motif at 8-18 (PSPTGYLHVGN) is the 'HIGH' region element. Residues 239–243 (KLSKR) carry the 'KMSKS' region motif. Position 242 (K242) interacts with ATP.

Belongs to the class-I aminoacyl-tRNA synthetase family. Glutamate--tRNA ligase type 1 subfamily. In terms of assembly, monomer.

It localises to the cytoplasm. The enzyme catalyses tRNA(Glu) + L-glutamate + ATP = L-glutamyl-tRNA(Glu) + AMP + diphosphate. Catalyzes the attachment of glutamate to tRNA(Glu) in a two-step reaction: glutamate is first activated by ATP to form Glu-AMP and then transferred to the acceptor end of tRNA(Glu). The chain is Glutamate--tRNA ligase 2 from Granulibacter bethesdensis (strain ATCC BAA-1260 / CGDNIH1).